Here is a 273-residue protein sequence, read N- to C-terminus: Multidrug-efflux transporter 2 regulator (273 aa).

An HTH merR-type domain is found at 8–77; the sequence is YFTTGEFSKL…LKEIKCLIKG (70 aa). Residues 11-30 constitute a DNA-binding region (H-T-H motif); sequence TGEFSKLCRVKKQTLFHYDE.

Its function is as follows. Activates transcription of the blt gene in response to structurally dissimilar drugs. The chain is Multidrug-efflux transporter 2 regulator (bltR) from Bacillus subtilis (strain 168).